The sequence spans 571 residues: Proline--tRNA ligase (571 aa).

Belongs to the class-II aminoacyl-tRNA synthetase family. ProS type 1 subfamily. As to quaternary structure, homodimer.

It localises to the cytoplasm. It catalyses the reaction tRNA(Pro) + L-proline + ATP = L-prolyl-tRNA(Pro) + AMP + diphosphate. Functionally, catalyzes the attachment of proline to tRNA(Pro) in a two-step reaction: proline is first activated by ATP to form Pro-AMP and then transferred to the acceptor end of tRNA(Pro). As ProRS can inadvertently accommodate and process non-cognate amino acids such as alanine and cysteine, to avoid such errors it has two additional distinct editing activities against alanine. One activity is designated as 'pretransfer' editing and involves the tRNA(Pro)-independent hydrolysis of activated Ala-AMP. The other activity is designated 'posttransfer' editing and involves deacylation of mischarged Ala-tRNA(Pro). The misacylated Cys-tRNA(Pro) is not edited by ProRS. The polypeptide is Proline--tRNA ligase (Vibrio cholerae serotype O1 (strain ATCC 39541 / Classical Ogawa 395 / O395)).